The primary structure comprises 347 residues: Histone deacetylase 11 (347 aa).

Positions 14 to 318 (TRWPIVYSPR…ARIIADSILN (305 aa)) are histone deacetylase. Residue histidine 143 is part of the active site.

This sequence belongs to the histone deacetylase family. As to quaternary structure, interacts with HDAC6.

Its subcellular location is the nucleus. The catalysed reaction is N(6)-acetyl-L-lysyl-[histone] + H2O = L-lysyl-[histone] + acetate. In terms of biological role, responsible for the deacetylation of lysine residues on the N-terminal part of the core histones (H2A, H2B, H3 and H4). Histone deacetylation gives a tag for epigenetic repression and plays an important role in transcriptional regulation, cell cycle progression and developmental events. Histone deacetylases act via the formation of large multiprotein complexes. This chain is Histone deacetylase 11 (HDAC11), found in Macaca fascicularis (Crab-eating macaque).